Consider the following 185-residue polypeptide: Large ribosomal subunit protein uL5 (185 aa).

Belongs to the universal ribosomal protein uL5 family. As to quaternary structure, part of the 50S ribosomal subunit; part of the 5S rRNA/L5/L18/L25 subcomplex. Contacts the 5S rRNA and the P site tRNA. Forms a bridge to the 30S subunit in the 70S ribosome.

Functionally, this is one of the proteins that bind and probably mediate the attachment of the 5S RNA into the large ribosomal subunit, where it forms part of the central protuberance. In the 70S ribosome it contacts protein S13 of the 30S subunit (bridge B1b), connecting the 2 subunits; this bridge is implicated in subunit movement. Contacts the P site tRNA; the 5S rRNA and some of its associated proteins might help stabilize positioning of ribosome-bound tRNAs. This is Large ribosomal subunit protein uL5 from Chelativorans sp. (strain BNC1).